The following is a 62-amino-acid chain: UPF0434 protein Avi_4243 (62 aa).

The protein belongs to the UPF0434 family.

This Allorhizobium ampelinum (strain ATCC BAA-846 / DSM 112012 / S4) (Agrobacterium vitis (strain S4)) protein is UPF0434 protein Avi_4243.